Here is a 372-residue protein sequence, read N- to C-terminus: Glutamate 5-kinase (372 aa).

Residue K14 participates in ATP binding. 3 residues coordinate substrate: S55, D142, and N154. Residues 174 to 175 (SD) and 216 to 222 (TGGMETK) each bind ATP. Residues 279 to 357 (QGSIIVDLGA…WEIADVLGHK (79 aa)) form the PUA domain.

Belongs to the glutamate 5-kinase family.

The protein localises to the cytoplasm. The catalysed reaction is L-glutamate + ATP = L-glutamyl 5-phosphate + ADP. It participates in amino-acid biosynthesis; L-proline biosynthesis; L-glutamate 5-semialdehyde from L-glutamate: step 1/2. Its function is as follows. Catalyzes the transfer of a phosphate group to glutamate to form L-glutamate 5-phosphate. The protein is Glutamate 5-kinase of Carboxydothermus hydrogenoformans (strain ATCC BAA-161 / DSM 6008 / Z-2901).